The following is a 605-amino-acid chain: Elongation factor 4 (605 aa).

The region spanning 9-192 is the tr-type G domain; that stretch reads CRIRNFCIIA…SIVHRIPPPA (184 aa). Residues 21 to 26 and 139 to 142 each bind GTP; these read DHGKST and NKID.

It belongs to the TRAFAC class translation factor GTPase superfamily. Classic translation factor GTPase family. LepA subfamily.

The protein localises to the cell inner membrane. The catalysed reaction is GTP + H2O = GDP + phosphate + H(+). Required for accurate and efficient protein synthesis under certain stress conditions. May act as a fidelity factor of the translation reaction, by catalyzing a one-codon backward translocation of tRNAs on improperly translocated ribosomes. Back-translocation proceeds from a post-translocation (POST) complex to a pre-translocation (PRE) complex, thus giving elongation factor G a second chance to translocate the tRNAs correctly. Binds to ribosomes in a GTP-dependent manner. This is Elongation factor 4 from Chlorobium chlorochromatii (strain CaD3).